A 464-amino-acid chain; its full sequence is Na(+)/H(+) antiporter NhaA 2 (464 aa).

Transmembrane regions (helical) follow at residues 53-73, 96-116, 134-154, 165-185, 195-215, 219-239, 257-277, 313-333, 340-360, 378-398, and 412-432; these read VGGI…NSPW, LTLG…VVGL, ALPI…FVLV, GWAI…AVIS, FLLT…AVFY, IKAW…VCAQ, VLVH…GFAV, IAIP…LSGL, PITL…ILVT, WVDV…SLLI, and FVKI…AIVL.

It belongs to the NhaA Na(+)/H(+) (TC 2.A.33) antiporter family.

It localises to the cell membrane. It catalyses the reaction Na(+)(in) + 2 H(+)(out) = Na(+)(out) + 2 H(+)(in). In terms of biological role, na(+)/H(+) antiporter that extrudes sodium in exchange for external protons. The protein is Na(+)/H(+) antiporter NhaA 2 of Mycolicibacterium vanbaalenii (strain DSM 7251 / JCM 13017 / BCRC 16820 / KCTC 9966 / NRRL B-24157 / PYR-1) (Mycobacterium vanbaalenii).